The chain runs to 170 residues: MORN repeat-containing protein 5 (170 aa).

MORN repeat units follow at residues 8–30 (YFGE…TDTR), 31–53 (YIGE…SGSR), and 54–75 (FDAI…DGLQ).

As to expression, only detected in testis (at protein level).

It localises to the cell projection. The protein resides in the cilium. It is found in the flagellum. The chain is MORN repeat-containing protein 5 (Morn5) from Mus musculus (Mouse).